Reading from the N-terminus, the 63-residue chain is Large ribosomal subunit protein uL29 (63 aa).

The protein belongs to the universal ribosomal protein uL29 family.

This is Large ribosomal subunit protein uL29 from Vibrio cholerae serotype O1 (strain ATCC 39541 / Classical Ogawa 395 / O395).